Here is a 354-residue protein sequence, read N- to C-terminus: Ferrochelatase (354 aa).

The Fe cation site is built by His214 and Glu295.

The protein belongs to the ferrochelatase family.

The protein localises to the cytoplasm. The enzyme catalyses heme b + 2 H(+) = protoporphyrin IX + Fe(2+). Its pathway is porphyrin-containing compound metabolism; protoheme biosynthesis; protoheme from protoporphyrin-IX: step 1/1. Catalyzes the ferrous insertion into protoporphyrin IX. The polypeptide is Ferrochelatase (Burkholderia orbicola (strain MC0-3)).